The following is a 625-amino-acid chain: Glucose dehydrogenase [FAD, quinone] (625 aa).

An N-terminal signal peptide occupies residues 1–42; sequence MSASASACDCLVGVPTGPTLASTCGGSAFMLFMGLLEVFIRS. 66-95 lines the FAD pocket; the sequence is DFIVIGGGSAGSVVASRLSEVPQWKVLLIE. The active-site Proton acceptor is the H544. Position 613 (U613) is a non-standard amino acid, selenocysteine.

Belongs to the GMC oxidoreductase family. The cofactor is FAD.

Its subcellular location is the secreted. It catalyses the reaction a quinone + D-glucose = D-glucono-1,5-lactone + a quinol. Its function is as follows. Essential for cuticular modification during development. The polypeptide is Glucose dehydrogenase [FAD, quinone] (Gld) (Drosophila melanogaster (Fruit fly)).